The chain runs to 260 residues: Indole-3-glycerol phosphate synthase (260 aa).

Belongs to the TrpC family.

The catalysed reaction is 1-(2-carboxyphenylamino)-1-deoxy-D-ribulose 5-phosphate + H(+) = (1S,2R)-1-C-(indol-3-yl)glycerol 3-phosphate + CO2 + H2O. Its pathway is amino-acid biosynthesis; L-tryptophan biosynthesis; L-tryptophan from chorismate: step 4/5. This Neisseria gonorrhoeae (strain NCCP11945) protein is Indole-3-glycerol phosphate synthase.